A 282-amino-acid polypeptide reads, in one-letter code: MTKDREIRQTVPAQPTSDGDGVKIQRIAGFQRPNFSPFLMLDELKADSQADYIGGFPPHPHRGIETLTYMLQGHFQHRDQMGNVGELRSGGAQWMAAGHGVIHSEMPIMQEGQLHGFQIWINQPARNKMSPAKYQDFQPESIVERHHPQQGLLRVIAGSVEVEDQTITGPLTDTGVPATVVDWRAEAGQDISINTPPHFNAMLYVYRGSLNVGKQSVKTGHMAMLTAGEQLTLRAEQPCGSLLLMGQPIDEPVVHYGPFVMNSMAEIEQAIRDYNAGHFETY.

Positions 1 to 21 (MTKDREIRQTVPAQPTSDGDG) are disordered. A divalent metal cation-binding residues include His-59, His-61, His-103, and Glu-105.

The protein belongs to the pirin family. It depends on a divalent metal cation as a cofactor.

The enzyme catalyses quercetin + O2 = 2-(3,4-dihydroxybenzoyloxy)-4,6-dihydroxybenzoate + CO. Its pathway is flavonoid metabolism; quercetin degradation. Its function is as follows. Putative quercetin 2,3-dioxygenase. The sequence is that of Putative quercetin 2,3-dioxygenase VC_A0969 from Vibrio cholerae serotype O1 (strain ATCC 39315 / El Tor Inaba N16961).